The primary structure comprises 210 residues: MARVLVLLSVVLVSLLVNQGRASDNQRLFNNAVIRVQHLHQLAAKMINDFEDSLLPEERRQLSKIFPLSFCNSDYIEAPAGKDETQKSSMLKLLRISFHLIESWEFPSQSLSGTVSNSLTVGNPNQLTEKLADLKMGISVLIQACLDGQPNMDDNDSLPLPFEDFYLTMGENNLRESFRLLACFKKDMHKVETYLRVANCRRSLDSNCTL.

The signal sequence occupies residues 1–23 (MARVLVLLSVVLVSLLVNQGRAS). Residue His-38 participates in Zn(2+) binding. Cys-71 and Cys-183 form a disulfide bridge. Residue Glu-192 coordinates Zn(2+). Cys-200 and Cys-208 form a disulfide bridge.

This sequence belongs to the somatotropin/prolactin family.

The protein localises to the secreted. Its function is as follows. Growth hormone plays an important role in growth control. The polypeptide is Somatotropin (gh) (Cyprinus carpio (Common carp)).